The primary structure comprises 466 residues: UDP-glycosyltransferase 91B1 (466 aa).

Residues threonine 286, valine 342–glutamine 344, histidine 359–glutamate 367, and asparagine 381–glutamine 384 contribute to the UDP-alpha-D-glucose site.

The protein belongs to the UDP-glycosyltransferase family.

In Arabidopsis thaliana (Mouse-ear cress), this protein is UDP-glycosyltransferase 91B1 (UGT91B1).